The primary structure comprises 378 residues: Stimulator of interferon genes protein (378 aa).

Transmembrane regions (helical) follow at residues 21–41 (AAFV…EPAD) and 46–66 (WLVL…LCSL). Residues cysteine 88 and cysteine 91 are each lipidated (S-palmitoyl cysteine). Transmembrane regions (helical) follow at residues 89–109 (LGCP…YTFL) and 114–134 (GLPF…NILL). The tract at residues 153–339 (FNVAHGLAWS…KHLKQEEKEE (187 aa)) is cyclic dinucleotide-binding domain (CBD). 2',3'-cGAMP is bound by residues serine 162, tyrosine 167, arginine 238, and threonine 263. Residues serine 162, tyrosine 167, 238–241 (RVYT), and threonine 263 contribute to the 3',3'-c-di-GMP site. Tyrosine 167, arginine 238, and threonine 263 together coordinate 2',3'-cUAMP. The segment at 339–378 (EVTVGTMGSSGVLESSTLDKEPQLLISGMDQPLPLRTDVF) is C-terminal tail (CTT). Residue serine 354 is modified to Phosphoserine. Threonine 355 carries the post-translational modification Phosphothreonine. The short motif at 362 to 365 (LLIS) is the pLxIS motif element. At serine 365 the chain carries Phosphoserine; by TBK1.

It belongs to the STING family. As to quaternary structure, homodimer; forms a homodimer in absence of cyclic nucleotide (c-di-GMP or cGAMP). Homotetramer; in presence of cyclic nucleotide (c-di-GMP or cGAMP), forms tetramers and higher-order oligomers through side-by-side packing. Interacts (when phosphorylated) with IRF3; following activation and phosphorylation on the pLxIS motif by TBK1, recruits IRF3. Interacts with TBK1; when homodimer, leading to subsequent production of IFN-beta. Phosphorylation by TBK1 leads to activation and production of IFN-beta. Following cyclic nucleotide (c-di-GMP or cGAMP)-binding, activation and translocation from the endoplasmic reticulum, STING1 is phosphorylated by TBK1 at Ser-365 in the pLxIS motif. The phosphorylated pLxIS motif constitutes an IRF3-binding motif, leading to recruitment of the transcription factor IRF3 to induce type-I interferons and other cytokines. In contrast, lacks phosphorylation site at position 357, leading to reduced production of type-I interferons and other cytokines.

It is found in the endoplasmic reticulum membrane. It localises to the cytoplasm. The protein localises to the perinuclear region. Its subcellular location is the endoplasmic reticulum-Golgi intermediate compartment membrane. The protein resides in the golgi apparatus membrane. It is found in the cytoplasmic vesicle. It localises to the autophagosome membrane. The protein localises to the mitochondrion outer membrane. Its subcellular location is the cell membrane. The enzyme catalyses H(+)(in) = H(+)(out). In terms of biological role, facilitator of innate immune signaling that acts as a sensor of cytosolic DNA from bacteria and viruses and promotes low production of type I interferon (IFN-alpha and IFN-beta). Compared to other mammals, STING1-dependent type I interferon induction is strongly reduced in bats, suggesting that the cGAS-STING pathway promotes a limited inflammatory response. Innate immune response is triggered in response to non-CpG double-stranded DNA from viruses and bacteria delivered to the cytoplasm. Acts by binding cyclic dinucleotides: recognizes and binds cyclic di-GMP (c-di-GMP), a second messenger produced by bacteria, cyclic UMP-AMP (2',3'-cUAMP), and cyclic GMP-AMP (cGAMP), a messenger produced by CGAS in response to DNA virus in the cytosol. Upon binding to c-di-GMP, cUAMP or cGAMP, STING1 oligomerizes, translocates from the endoplasmic reticulum and is phosphorylated by TBK1 on the pLxIS motif, leading to recruitment and subsequent activation of the transcription factor IRF3 to induce expression of type I interferon and exert a potent anti-viral state. In addition to promote the production of type I interferons, plays a direct role in autophagy. Following cGAMP-binding, STING1 buds from the endoplasmic reticulum into COPII vesicles, which then form the endoplasmic reticulum-Golgi intermediate compartment (ERGIC). The ERGIC serves as the membrane source for WIPI2 recruitment and LC3 lipidation, leading to formation of autophagosomes that target cytosolic DNA or DNA viruses for degradation by the lysosome. Promotes autophagy by acting as a proton channel that directs proton efflux from the Golgi to facilitate MAP1LC3B/LC3B lipidation. The autophagy- and interferon-inducing activities can be uncoupled and autophagy induction is independent of TBK1 phosphorylation. This chain is Stimulator of interferon genes protein, found in Rhinolophus ferrumequinum (Greater horseshoe bat).